A 448-amino-acid polypeptide reads, in one-letter code: tRNA(Ile)-lysidine synthase (448 aa).

Residue Ser27 to Ser32 participates in ATP binding.

This sequence belongs to the tRNA(Ile)-lysidine synthase family.

The protein resides in the cytoplasm. The enzyme catalyses cytidine(34) in tRNA(Ile2) + L-lysine + ATP = lysidine(34) in tRNA(Ile2) + AMP + diphosphate + H(+). Functionally, ligates lysine onto the cytidine present at position 34 of the AUA codon-specific tRNA(Ile) that contains the anticodon CAU, in an ATP-dependent manner. Cytidine is converted to lysidine, thus changing the amino acid specificity of the tRNA from methionine to isoleucine. In Vibrio campbellii (strain ATCC BAA-1116), this protein is tRNA(Ile)-lysidine synthase.